We begin with the raw amino-acid sequence, 514 residues long: MTTAKRPLALLILDGWGYRENTHNNAIFHANTPVLDRLNAQYPHSLISGSGLDVGLPDGQMGNSEVGHINLGSGRVVYQELTRISKAIADHEFEQNPALCDAVDSAIKAGGAVHIMGLLSAGGVHSHEEHIEAMCRMAVARGATKVYLHAFLDGRDTPPRSAKTSLSHFDDLFTTLGHGRIASIIGRYFAMDRDNRWDRVSQAYDLITQGKSKFQYDNAVTALEAAYERNENDEFVSSSAITDADGQVATLQDGDALIFMNFRADRARQITRSFINPDFDGFERAVVPKMHFVTLTEYAGDIKAPIAYPSENLVNTLGEVLQKQGRTQLRISETEKYAHVTFFFNGGKEEPFEGEDRILINSPKVATYDLQPEMSSAELTDKLVAAIESTKYDVIICNYPNGDMVGHTGNFDAAVKACEAVDACIGRVVDALAKVGGECIITADHGNAEQMTDETTGQAHTAHTSELVPFVFVGRNATIDEGGKLSDVAPTILTLIGEAIPAEMTGKPLIHIKE.

Residues D14 and S64 each contribute to the Mn(2+) site. Residue S64 is the Phosphoserine intermediate of the active site. Substrate is bound by residues H125, R155–D156, R187, R193, R263–R266, and K336. Mn(2+) contacts are provided by D403, H407, D444, H445, and H463.

It belongs to the BPG-independent phosphoglycerate mutase family. As to quaternary structure, monomer. It depends on Mn(2+) as a cofactor.

It carries out the reaction (2R)-2-phosphoglycerate = (2R)-3-phosphoglycerate. The protein operates within carbohydrate degradation; glycolysis; pyruvate from D-glyceraldehyde 3-phosphate: step 3/5. Its function is as follows. Catalyzes the interconversion of 2-phosphoglycerate and 3-phosphoglycerate. The chain is 2,3-bisphosphoglycerate-independent phosphoglycerate mutase from Shewanella baltica (strain OS185).